The sequence spans 298 residues: GTPase Era (298 aa).

Residues 8 to 176 (RCGRIAVIGR…VSDLLALLPE (169 aa)) enclose the Era-type G domain. The interval 16 to 23 (GRPNVGKS) is G1. Residue 16–23 (GRPNVGKS) participates in GTP binding. The segment at 42-46 (QTTRH) is G2. The tract at residues 63–66 (DTPG) is G3. GTP-binding positions include 63–67 (DTPGL) and 125–128 (NKID). Residues 125–128 (NKID) form a G4 region. Residues 155–157 (VSA) are G5. A KH type-2 domain is found at 199 to 283 (VREQVMRQLG…FLETWVRVRK (85 aa)).

Belongs to the TRAFAC class TrmE-Era-EngA-EngB-Septin-like GTPase superfamily. Era GTPase family. Monomer.

Its subcellular location is the cytoplasm. The protein localises to the cell inner membrane. An essential GTPase that binds both GDP and GTP, with rapid nucleotide exchange. Plays a role in 16S rRNA processing and 30S ribosomal subunit biogenesis and possibly also in cell cycle regulation and energy metabolism. The chain is GTPase Era from Xylella fastidiosa (strain M12).